The following is a 262-amino-acid chain: Undecaprenyl-diphosphatase (262 aa).

8 consecutive transmembrane segments (helical) span residues 15 to 35 (LTEW…IILL), 38 to 58 (SSAA…IVAF), 91 to 111 (LYIL…AKYV), 114 to 134 (IFGS…LLYS), 149 to 169 (ALIV…RSGA), 189 to 209 (FLLS…VSPA), 219 to 239 (VGLL…LSII), and 242 to 262 (GRLH…LSLL).

Belongs to the UppP family.

The protein resides in the cell membrane. It catalyses the reaction di-trans,octa-cis-undecaprenyl diphosphate + H2O = di-trans,octa-cis-undecaprenyl phosphate + phosphate + H(+). Functionally, catalyzes the dephosphorylation of undecaprenyl diphosphate (UPP). The polypeptide is Undecaprenyl-diphosphatase (Korarchaeum cryptofilum (strain OPF8)).